Consider the following 289-residue polypeptide: MRKVPGPITLIEPLSGNTSLLIKINAIHSVKKSPYQEIIIADTEDYGRVLILDDYIQSSYVDEQYYHESLVHPAMATHPNPRDVLILGGGEGATLREALKHGTVKRAVMVDIDRDVVELSRAYLPQMHQGAFDDPRAKVVIQDGFVYVEEAIKAGDKYDVIIMDLTDPYSSDIAKQLYTREFFAKIRRILNDDGVVVTQAGNSFYFPAEYDMVLEGVKANFPIVAEYEVWIPSFGYAVNFILGSLRYDPHALTPSEVDERLRARGVKTAFYTGRVHLALMNMPIHRKLR.

The 241-residue stretch at 5-245 (PGPITLIEPL…YAVNFILGSL (241 aa)) folds into the PABS domain. Gln-36 serves as a coordination point for S-methyl-5'-thioadenosine. Spermidine contacts are provided by His-67 and Glu-91. Residues Asp-111 and 143–144 (DG) each bind S-methyl-5'-thioadenosine. Residue Asp-164 is the Proton acceptor of the active site.

Belongs to the spermidine/spermine synthase family. Homodimer or homotetramer.

The protein resides in the cytoplasm. It carries out the reaction S-adenosyl 3-(methylsulfanyl)propylamine + putrescine = S-methyl-5'-thioadenosine + spermidine + H(+). It participates in amine and polyamine biosynthesis; spermidine biosynthesis; spermidine from putrescine: step 1/1. Its function is as follows. Catalyzes the irreversible transfer of a propylamine group from the amino donor S-adenosylmethioninamine (decarboxy-AdoMet) to putrescine (1,4-diaminobutane) to yield spermidine. The protein is Polyamine aminopropyltransferase of Pyrobaculum calidifontis (strain DSM 21063 / JCM 11548 / VA1).